The chain runs to 288 residues: Pantothenate synthetase (288 aa).

Residue 30–37 coordinates ATP; that stretch reads MGNLHAGH. The active-site Proton donor is the H37. Q61 contacts (R)-pantoate. Residue Q61 coordinates beta-alanine. 149 to 152 serves as a coordination point for ATP; the sequence is GLKD. Q155 lines the (R)-pantoate pocket. ATP is bound by residues I178 and 186 to 189; that span reads LSSR.

Belongs to the pantothenate synthetase family. As to quaternary structure, homodimer.

It is found in the cytoplasm. The catalysed reaction is (R)-pantoate + beta-alanine + ATP = (R)-pantothenate + AMP + diphosphate + H(+). It functions in the pathway cofactor biosynthesis; (R)-pantothenate biosynthesis; (R)-pantothenate from (R)-pantoate and beta-alanine: step 1/1. Functionally, catalyzes the condensation of pantoate with beta-alanine in an ATP-dependent reaction via a pantoyl-adenylate intermediate. In Colwellia psychrerythraea (strain 34H / ATCC BAA-681) (Vibrio psychroerythus), this protein is Pantothenate synthetase.